The chain runs to 281 residues: Energy-coupling factor transporter ATP-binding protein EcfA2 (281 aa).

The 240-residue stretch at 3-242 (IKVTGLTYVY…TETLEEIGLA (240 aa)) folds into the ABC transporter domain. 40–47 (GHTGSGKS) contributes to the ATP binding site.

Belongs to the ABC transporter superfamily. Energy-coupling factor EcfA family. As to quaternary structure, forms a stable energy-coupling factor (ECF) transporter complex composed of 2 membrane-embedded substrate-binding proteins (S component), 2 ATP-binding proteins (A component) and 2 transmembrane proteins (T component).

Its subcellular location is the cell membrane. ATP-binding (A) component of a common energy-coupling factor (ECF) ABC-transporter complex. Unlike classic ABC transporters this ECF transporter provides the energy necessary to transport a number of different substrates. This is Energy-coupling factor transporter ATP-binding protein EcfA2 from Acetivibrio thermocellus (strain ATCC 27405 / DSM 1237 / JCM 9322 / NBRC 103400 / NCIMB 10682 / NRRL B-4536 / VPI 7372) (Clostridium thermocellum).